A 324-amino-acid polypeptide reads, in one-letter code: MTSTITTTETLQDAVPFVAPPSPPEDTSNKELPEKPYYDVEFNYRLDPRDGGDEVIWGGTVGLMRRKYETRTVRINNERGNEHNFNLDTHGFAWVKHKTSVTEFADYLAIRQGPYFGEVAEMLKRVTGATKVHVIGHLHRSLNYNDTTEEEKNAPDMTMTKGQTPGRFVHVDQSYQGAVRRLYLDLPQEEARRLEKTRWAIINVWRPVRKVTNEPLAVCDARSVREDELFNTLHLVPMRWPDAAPQENQMWAVAPPKTPTQHKWHYVSGMTEDEALLIKMFDSKKDGTARRVPHSSFPTPDDFGEPRASTETRCFVFWEDQEAE.

Over residues M1–L11 the composition is skewed to polar residues. Disordered regions lie at residues M1 to P33 and T288 to A308.

It belongs to the asaB hydroxylase/desaturase family.

It participates in mycotoxin biosynthesis. Its function is as follows. Hydroxylase/desaturase; part of the gene cluster that mediates the biosynthesis of cercosporin, a light-activated, non-host-selective toxin. The perylenequinone chromophore of cercosporin absorbs light energy to attain an electronically-activated triplet state and produces active oxygen species such as the hydroxyl radical, superoxide, hydrogen peroxide or singlet oxygen upon reaction with oxygen molecules. These reactive oxygen species cause damage to various cellular components including lipids, proteins and nucleic acids. The first step of cercosporin biosynthesis is performed by the polyketide synthase CTB1 which catalyzes the formation of nor-toralactone. The starter unit acyltransferase (SAT) domain of CTB1 initiates polyketide extension by the selective utilization of acetyl-CoA, which is elongated to the heptaketide in the beta-ketoacyl synthase (KS) domain by successive condensations with six malonyl units introduced by the malonyl acyltransferase (MAT) domain. The product template (PT) domain catalyzes C4-C9 and C2-C11 aldol cyclizations and dehydrations to a trihydroxynaphthalene, which is thought to be delivered to the thioesterase (TE) domain for product release. The bifunctional enzyme CTB3 then methylates nor-toralactone to toralactone before conducting an unusual oxidative aromatic ring opening. The O-methyltransferase CTB2 further methylates the nascent OH-6 of the CBT3 product, blocking further oxidation at this site before the reductase CTB6 reduces the 2-oxopropyl ketone at position C7, giving naphthalene. The FAD-dependent monooxygenase CTB5 in concert with the multicopper oxidase CTB12 are responsible for homodimerization of naphthalene with CTB7 installing the dioxepine moiety, finally producing cercosporin. The fasciclin domain-containing protein CTB11 might act with CTB5 and CTB12 whereas the roles of CTB9 and CTB10 have still to be elucidated. This chain is Hydroxylase/desaturase CTB9, found in Cercospora beticola (Sugarbeet leaf spot fungus).